The primary structure comprises 850 residues: Envelope glycoprotein gp160 (850 aa).

A signal peptide spans 1–28; it reads METQTSWLSLWRWGLMIFGMLMICSARE. Residues 29–678 are Extracellular-facing; it reads NLWVTVYYGV…ISNWLWYIKI (650 aa). Cys50 and Cys70 are disulfide-bonded. Residues Asn84, Asn126, Asn133, Asn134, Asn139, Asn152, Asn156, Asn184, Asn193, Asn226, Asn230, Asn237, Asn258, Asn272, Asn285, Asn297, Asn327, Asn334, and Asn349 are each glycosylated (N-linked (GlcNAc...) asparagine; by host). 5 disulfides stabilise this stretch: Cys115–Cys201, Cys122–Cys192, Cys127–Cys153, Cys214–Cys243, and Cys224–Cys235. The segment at 127–152 is V1; that stretch reads CSDVNSNNSTDSNSSASNNSPEIMKN. Residues 153–192 are V2; that stretch reads CSFNVTTEIRNKRKQEYALFYRQDVVPINSDNKSYILINC. Residues 292–325 are V3; it reads CTRPNNNTRKGIHMGPGQVLYATGEIIGDIRKAY. Cysteines 292 and 326 form a disulfide. Residues 357 to 367 are CD4-binding loop; the sequence is PSGGDIEITTH. Disulfide bonds link Cys371-Cys436 and Cys378-Cys409. A V4 region spans residues 378–409; that stretch reads CNTSTLFNSSWDENNIKDTNSTNDNTTITIPC. 8 N-linked (GlcNAc...) asparagine; by host glycosylation sites follow: Asn379, Asn385, Asn397, Asn402, Asn433, Asn439, Asn453, and Asn457. Residues 447 to 467 form a disordered region; sequence RDGGNRNGSENGTETFRPTGG. The span at 453–462 shows a compositional bias: polar residues; the sequence is NGSENGTETF. V5 regions lie at residues 453–465 and 454–465; these read NGSENGTETFRPT and GSENGTETFRPT. Positions 506–526 are fusion peptide; sequence AVGIGAVFLGFLGTAGSTMGA. An immunosuppression region spans residues 568–586; sequence KQLQARVLAVERYLKDQQL. Cys592 and Cys598 are disulfide-bonded. 5 N-linked (GlcNAc...) asparagine; by host glycosylation sites follow: Asn605, Asn610, Asn619, Asn631, and Asn668. A coiled-coil region spans residues 627 to 661; sequence REINNYTGIIYSLIEEAQNQQETNEKDLLALDKWT. Residues 656 to 677 are MPER; binding to GalCer; the sequence is ALDKWTNLWNWFNISNWLWYIK. Residues 679–699 traverse the membrane as a helical segment; it reads FIMIIGGLIGLRIIFAVLAIV. Residues 700–850 are Cytoplasmic-facing; the sequence is NRVRQGYSPL…IRQGLERALL (151 aa). The YXXL motif; contains endocytosis signal signature appears at 706 to 709; sequence YSPL. Cys758 is lipidated: S-palmitoyl cysteine; by host. The Di-leucine internalization motif motif lies at 849 to 850; the sequence is LL.

The protein belongs to the HIV-1 env protein family. As to quaternary structure, the mature envelope protein (Env) consists of a homotrimer of non-covalently associated gp120-gp41 heterodimers. The resulting complex protrudes from the virus surface as a spike. There seems to be as few as 10 spikes on the average virion. Interacts with host CD4, CCR5 and CXCR4. Gp120 also interacts with the C-type lectins CD209/DC-SIGN and CLEC4M/DC-SIGNR (collectively referred to as DC-SIGN(R)). Gp120 and gp41 interact with GalCer. Gp120 interacts with host ITGA4/ITGB7 complex; on CD4+ T-cells, this interaction results in rapid activation of integrin ITGAL/LFA-1, which facilitates efficient cell-to-cell spreading of HIV-1. Gp120 interacts with cell-associated heparan sulfate; this interaction increases virus infectivity on permissive cells and may be involved in infection of CD4- cells. The mature envelope protein (Env) consists of a homotrimer of non-covalently associated gp120-gp41 heterodimers. The resulting complex protrudes from the virus surface as a spike. There seems to be as few as 10 spikes on the average virion. Highly glycosylated by host. The high number of glycan on the protein is reffered to as 'glycan shield' because it contributes to hide protein sequence from adaptive immune system. Post-translationally, palmitoylation of the transmembrane protein and of Env polyprotein (prior to its proteolytic cleavage) is essential for their association with host cell membrane lipid rafts. Palmitoylation is therefore required for envelope trafficking to classical lipid rafts, but not for viral replication. In terms of processing, specific enzymatic cleavages in vivo yield mature proteins. Envelope glycoproteins are synthesized as an inactive precursor that is heavily N-glycosylated and processed likely by host cell furin in the Golgi to yield the mature SU and TM proteins. The cleavage site between SU and TM requires the minimal sequence [KR]-X-[KR]-R. About 2 of the 9 disulfide bonds of gp41 are reduced by P4HB/PDI, following binding to CD4 receptor.

The protein resides in the virion membrane. Its subcellular location is the host cell membrane. The protein localises to the host endosome membrane. Its function is as follows. Oligomerizes in the host endoplasmic reticulum into predominantly trimers. In a second time, gp160 transits in the host Golgi, where glycosylation is completed. The precursor is then proteolytically cleaved in the trans-Golgi and thereby activated by cellular furin or furin-like proteases to produce gp120 and gp41. In terms of biological role, attaches the virus to the host lymphoid cell by binding to the primary receptor CD4. This interaction induces a structural rearrangement creating a high affinity binding site for a chemokine coreceptor like CXCR4 and/or CCR5. Acts as a ligand for CD209/DC-SIGN and CLEC4M/DC-SIGNR, which are respectively found on dendritic cells (DCs), and on endothelial cells of liver sinusoids and lymph node sinuses. These interactions allow capture of viral particles at mucosal surfaces by these cells and subsequent transmission to permissive cells. HIV subverts the migration properties of dendritic cells to gain access to CD4+ T-cells in lymph nodes. Virus transmission to permissive T-cells occurs either in trans (without DCs infection, through viral capture and transmission), or in cis (following DCs productive infection, through the usual CD4-gp120 interaction), thereby inducing a robust infection. In trans infection, bound virions remain infectious over days and it is proposed that they are not degraded, but protected in non-lysosomal acidic organelles within the DCs close to the cell membrane thus contributing to the viral infectious potential during DCs' migration from the periphery to the lymphoid tissues. On arrival at lymphoid tissues, intact virions recycle back to DCs' cell surface allowing virus transmission to CD4+ T-cells. Functionally, acts as a class I viral fusion protein. Under the current model, the protein has at least 3 conformational states: pre-fusion native state, pre-hairpin intermediate state, and post-fusion hairpin state. During fusion of viral and target intracellular membranes, the coiled coil regions (heptad repeats) assume a trimer-of-hairpins structure, positioning the fusion peptide in close proximity to the C-terminal region of the ectodomain. The formation of this structure appears to drive apposition and subsequent fusion of viral and target cell membranes. Complete fusion occurs in host cell endosomes and is dynamin-dependent, however some lipid transfer might occur at the plasma membrane. The virus undergoes clathrin-dependent internalization long before endosomal fusion, thus minimizing the surface exposure of conserved viral epitopes during fusion and reducing the efficacy of inhibitors targeting these epitopes. Membranes fusion leads to delivery of the nucleocapsid into the cytoplasm. The protein is Envelope glycoprotein gp160 of Human immunodeficiency virus type 1 group M subtype J (isolate SE9173) (HIV-1).